A 974-amino-acid polypeptide reads, in one-letter code: Translation initiation factor IF-2 (974 aa).

Residues 31 to 376 (FVKSASSTVE…APAVGGVRLP (346 aa)) form a disordered region. Residues 52-68 (PSAKSADSAARPAAKPG) show a composition bias toward low complexity. Residues 83-96 (GPRPGPKPAAPAPA) show a composition bias toward pro residues. The span at 97-133 (APAAAAPAATPAAQAPAPAAPAASTATPAAPASNAPK) shows a compositional bias: low complexity. The segment covering 134–147 (PGRPTPAAPAPAAP) has biased composition (pro residues). Composition is skewed to low complexity over residues 148-166 (AAPAAPAAASTPAAPSTGA) and 179-191 (RVGNNPYSSAPAE). Composition is skewed to pro residues over residues 195–210 (PRPAPGAPRPGAPRPA) and 253–266 (RPSPGSMPPRPNPG). Over residues 267–277 (AMPARSARPAP) the composition is skewed to low complexity. Positions 279–332 (GRPGRPGGAPGGRPGGGGGGYRGGGAPGAGAGAPGGGAPAGGFRGRPGGGGRPG) are enriched in gly residues. Positions 349–358 (RRGRKSKRQK) are enriched in basic residues. The tr-type G domain occupies 470–641 (SRPPVVTVMG…AVLLTADAAL (172 aa)). The segment at 479–486 (GHVDHGKT) is G1. 479 to 486 (GHVDHGKT) provides a ligand contact to GTP. The interval 504 to 508 (GITQH) is G2. Residues 529–532 (DTPG) are G3. GTP is bound by residues 529–533 (DTPGH) and 583–586 (NKID). The segment at 583–586 (NKID) is G4. The tract at residues 619-621 (SAK) is G5.

This sequence belongs to the TRAFAC class translation factor GTPase superfamily. Classic translation factor GTPase family. IF-2 subfamily.

The protein localises to the cytoplasm. One of the essential components for the initiation of protein synthesis. Protects formylmethionyl-tRNA from spontaneous hydrolysis and promotes its binding to the 30S ribosomal subunits. Also involved in the hydrolysis of GTP during the formation of the 70S ribosomal complex. This chain is Translation initiation factor IF-2, found in Rhodococcus opacus (strain B4).